The chain runs to 124 residues: UPF0212 protein Hlac_0869 (124 aa).

Belongs to the UPF0212 family.

This is UPF0212 protein Hlac_0869 from Halorubrum lacusprofundi (strain ATCC 49239 / DSM 5036 / JCM 8891 / ACAM 34).